Here is a 789-residue protein sequence, read N- to C-terminus: DNA topoisomerase 4 subunit A (789 aa).

The region spanning 34–499 (LPDLRDGLKP…EKQKVQDSDF (466 aa)) is the Topo IIA-type catalytic domain. Tyrosine 122 acts as the O-(5'-phospho-DNA)-tyrosine intermediate in catalysis.

This sequence belongs to the type II topoisomerase GyrA/ParC subunit family. ParC type 2 subfamily. In terms of assembly, heterotetramer composed of ParC and ParE.

It is found in the cell membrane. It catalyses the reaction ATP-dependent breakage, passage and rejoining of double-stranded DNA.. Functionally, topoisomerase IV is essential for chromosome segregation. It relaxes supercoiled DNA. Performs the decatenation events required during the replication of a circular DNA molecule. This chain is DNA topoisomerase 4 subunit A, found in Mycoplasma pneumoniae (strain ATCC 29342 / M129 / Subtype 1) (Mycoplasmoides pneumoniae).